The following is a 137-amino-acid chain: Small heat shock protein IbpA (137 aa).

A sHSP domain is found at 28–137 (NQSNGGYPPY…SLKPRRIEIK (110 aa)).

It belongs to the small heat shock protein (HSP20) family. As to quaternary structure, monomer. Forms homomultimers of about 100-150 subunits at optimal growth temperatures. Conformation changes to monomers at high temperatures or high ionic concentrations.

The protein resides in the cytoplasm. Functionally, associates with aggregated proteins, together with IbpB, to stabilize and protect them from irreversible denaturation and extensive proteolysis during heat shock and oxidative stress. Aggregated proteins bound to the IbpAB complex are more efficiently refolded and reactivated by the ATP-dependent chaperone systems ClpB and DnaK/DnaJ/GrpE. Its activity is ATP-independent. This chain is Small heat shock protein IbpA, found in Yersinia pseudotuberculosis serotype O:1b (strain IP 31758).